Consider the following 352-residue polypeptide: B1 bradykinin receptor (352 aa).

Residues 1 to 41 (MASWPPLELQSSNQSQLFPQNATACDNAPEAWDLLHRVLPT) are Extracellular-facing. Residues N13 and N21 are each glycosylated (N-linked (GlcNAc...) asparagine). Residues 42 to 62 (FIISICSFGLLGNLFVLLVFL) traverse the membrane as a helical segment. Residues 63–72 (LPRRRLNVAE) are Cytoplasmic-facing. Residues 73 to 93 (IYLANLAASDLVFVLGLPFWA) traverse the membrane as a helical segment. Residues 94 to 110 (ENIWNQFNWPFGALLCR) lie on the Extracellular side of the membrane. C109 and C188 are disulfide-bonded. Residues 111 to 131 (GINGVIKANLFISIFLVVAIS) traverse the membrane as a helical segment. Residues 132-153 (QDRYCLLVHPMASRRRQRRRQA) are Cytoplasmic-facing. The helical transmembrane segment at 154-174 (RVTCVLIWVVGGLLSIPTFLL) threads the bilayer. The Extracellular segment spans residues 175-206 (RSIQAVPDLNITACILLLPHEAWHFARIVELN). N-linked (GlcNAc...) asparagine glycosylation is present at N184. A helical transmembrane segment spans residues 207 to 227 (ILAFLLPLAAIVFFNYHILAS). The Cytoplasmic segment spans residues 228 to 250 (LRGREEVSRTRCGGRKDSKTTAL). The chain crosses the membrane as a helical span at residues 251–271 (ILTLVVAFLVCWAPYHFFAFL). At 272–294 (EFLFQVQAIRSCFWEDFIDLGLQ) the chain is on the extracellular side. The chain crosses the membrane as a helical span at residues 295 to 315 (LANFLAFTNSSLNPVIYVFVG). The Cytoplasmic segment spans residues 316–352 (RLFRTKVWELYKQCTPKSLAPISSSHRKEIFQLFWRN). C329 carries S-palmitoyl cysteine lipidation.

The protein belongs to the G-protein coupled receptor 1 family. Bradykinin receptor subfamily. BDKRB1 sub-subfamily.

It is found in the cell membrane. Its function is as follows. This is a receptor for bradykinin. Could be a factor in chronic pain and inflammation. In Chlorocebus pygerythrus (Vervet monkey), this protein is B1 bradykinin receptor (BDKRB1).